The sequence spans 118 residues: Small ribosomal subunit protein uS11 (118 aa).

Belongs to the universal ribosomal protein uS11 family. As to quaternary structure, part of the 30S ribosomal subunit. Interacts with proteins S7 and S18. Binds to IF-3.

Its function is as follows. Located on the platform of the 30S subunit, it bridges several disparate RNA helices of the 16S rRNA. Forms part of the Shine-Dalgarno cleft in the 70S ribosome. The protein is Small ribosomal subunit protein uS11 of Carsonella ruddii (strain PV).